Consider the following 114-residue polypeptide: Late cornified envelope protein 1D (114 aa).

The segment covering Met-1–Cys-10 has biased composition (low complexity). Disordered regions lie at residues Met-1–Thr-21 and His-75–Cys-114. Residues His-75–Pro-86 are compositionally biased toward basic residues. The span at Ser-88–Ser-99 shows a compositional bias: low complexity.

Belongs to the LCE family. Interacts with CYSRT1. Skin-specific. Expression was readily detected in adult trunk skin, adult arm skin, fetal skin, penal skin, vulva, esophagus and tongue. Not expressed in the cervix, rectum, lung, colon, or placenta.

Precursors of the cornified envelope of the stratum corneum. The chain is Late cornified envelope protein 1D (LCE1D) from Homo sapiens (Human).